A 331-amino-acid polypeptide reads, in one-letter code: Eukaryotic translation initiation factor 2 subunit 2 (331 aa).

Disordered regions lie at residues 1 to 75 and 97 to 120; these read MSGD…DLNF and AIKD…LDIM. An N-acetylserine modification is found at serine 2. A phosphoserine mark is found at serine 2 and serine 13. The span at 13–22 shows a compositional bias: basic residues; sequence SKKKKKKKKP. Threonine 36 is modified (phosphothreonine). Residues 40-51 show a composition bias toward basic and acidic residues; the sequence is ETKEVEPEPTEE. Serine 67 carries the phosphoserine modification. Lysine 102 participates in a covalent cross-link: Glycyl lysine isopeptide (Lys-Gly) (interchain with G-Cter in SUMO2). Serine 105 is subject to Phosphoserine. The span at 106–118 shows a compositional bias: acidic residues; sequence DAQEPAEPEDDLD. 2 positions are modified to phosphoserine: serine 158 and serine 216. Residues lysine 263 and lysine 291 each carry the N6-acetyllysine modification. The segment at 279–303 adopts a C4-type zinc-finger fold; it reads CHTCRSPDTILQKDTRLYFLQCETC.

This sequence belongs to the eIF-2-beta/eIF-5 family. Eukaryotic translation initiation factor 2 eIF2 is a heterotrimeric complex composed of an alpha (EIF2S1), a beta (EIF2S2) and a gamma (EIF2S3) chain. eIF2 is member of the 43S pre-initiation complex (43S PIC). eIF2 forms a complex with at least CELF1/CUGBP1, CALR, CALR3, EIF2S1, EIF2S2, HSP90B1 and HSPA5. Interacts with BZW2/5MP1. Interacts with EIF5.

The protein resides in the cytoplasm. It localises to the cytosol. Component of the eIF2 complex that functions in the early steps of protein synthesis by forming a ternary complex with GTP and initiator tRNA. This complex binds to a 40S ribosomal subunit, followed by mRNA binding to form the 43S pre-initiation complex (43S PIC). Junction of the 60S ribosomal subunit to form the 80S initiation complex is preceded by hydrolysis of the GTP bound to eIF2 and release of an eIF2-GDP binary complex. In order for eIF2 to recycle and catalyze another round of initiation, the GDP bound to eIF2 must exchange with GTP by way of a reaction catalyzed by eIF2B. This Mus musculus (Mouse) protein is Eukaryotic translation initiation factor 2 subunit 2 (Eif2s2).